The following is a 615-amino-acid chain: Alpha-fetoprotein (615 aa).

The N-terminal stretch at 1–15 (MAVLPLSGAIRLSRG) is a signal peptide. The Cell attachment site signature appears at 14 to 16 (RGD). 3 Albumin domains span residues 27-218 (WAKK…RRQA), 223-415 (KPIR…ELKK), and 416-609 (HIYE…VLVT). 2 disulfides stabilise this stretch: C109/C121 and C120/C131. 2 N-linked (GlcNAc...) asparagine glycosylation sites follow: N137 and N157. 9 cysteine pairs are disulfide-bonded: C155–C200, C199–C213, C236–C282, C281–C289, C301–C315, C314–C325, C396–C405, C428–C458, and C457–C468. The short motif at 283–285 (RGD) is the Cell attachment site element. An N-linked (GlcNAc...) asparagine glycan is attached at N472. 4 disulfides stabilise this stretch: C485–C501, C500–C511, C538–C593, and C592–C601.

Belongs to the ALB/AFP/VDB family. In terms of assembly, dimeric and trimeric forms have been found in addition to the monomeric form. Sulfated.

The protein resides in the secreted. Its function is as follows. Binds copper, nickel, and fatty acids as well as, and bilirubin less well than, serum albumin. This is Alpha-fetoprotein (AFP) from Gallus gallus (Chicken).